The sequence spans 496 residues: Probable malate:quinone oxidoreductase (496 aa).

The protein belongs to the MQO family. FAD is required as a cofactor.

The enzyme catalyses (S)-malate + a quinone = a quinol + oxaloacetate. The protein operates within carbohydrate metabolism; tricarboxylic acid cycle; oxaloacetate from (S)-malate (quinone route): step 1/1. This chain is Probable malate:quinone oxidoreductase, found in Flavobacterium psychrophilum (strain ATCC 49511 / DSM 21280 / CIP 103535 / JIP02/86).